Here is a 198-residue protein sequence, read N- to C-terminus: Ribonuclease HII (198 aa).

In terms of domain architecture, RNase H type-2 spans 3–198; the sequence is LSVGGIDEAG…SWETVGKLFK (196 aa). Positions 9, 10, and 104 each coordinate a divalent metal cation.

Belongs to the RNase HII family. It depends on Mn(2+) as a cofactor. Requires Mg(2+) as cofactor.

The protein resides in the cytoplasm. The catalysed reaction is Endonucleolytic cleavage to 5'-phosphomonoester.. Its function is as follows. Endonuclease that specifically degrades the RNA of RNA-DNA hybrids. This chain is Ribonuclease HII, found in Pyrobaculum arsenaticum (strain DSM 13514 / JCM 11321 / PZ6).